We begin with the raw amino-acid sequence, 720 residues long: 1,4-alpha-glucan branching enzyme GlgB 2 (720 aa).

Asp398 (nucleophile) is an active-site residue. Residue Glu451 is the Proton donor of the active site.

The protein belongs to the glycosyl hydrolase 13 family. GlgB subfamily. Monomer.

It catalyses the reaction Transfers a segment of a (1-&gt;4)-alpha-D-glucan chain to a primary hydroxy group in a similar glucan chain.. Its pathway is glycan biosynthesis; glycogen biosynthesis. In terms of biological role, catalyzes the formation of the alpha-1,6-glucosidic linkages in glycogen by scission of a 1,4-alpha-linked oligosaccharide from growing alpha-1,4-glucan chains and the subsequent attachment of the oligosaccharide to the alpha-1,6 position. The protein is 1,4-alpha-glucan branching enzyme GlgB 2 of Xanthomonas oryzae pv. oryzae (strain KACC10331 / KXO85).